The primary structure comprises 381 residues: Queuine tRNA-ribosyltransferase (381 aa).

Residue Asp-96 is the Proton acceptor of the active site. Residues 96–100 (DSGGF), Asp-150, Gln-193, and Gly-220 contribute to the substrate site. Residues 251-257 (GVGAPDS) are RNA binding. The Nucleophile role is filled by Asp-270. The tract at residues 275–279 (TRIAR) is RNA binding; important for wobble base 34 recognition. Cys-308, Cys-310, Cys-313, and His-339 together coordinate Zn(2+).

Belongs to the queuine tRNA-ribosyltransferase family. As to quaternary structure, homodimer. Within each dimer, one monomer is responsible for RNA recognition and catalysis, while the other monomer binds to the replacement base PreQ1. Zn(2+) is required as a cofactor.

It carries out the reaction 7-aminomethyl-7-carbaguanine + guanosine(34) in tRNA = 7-aminomethyl-7-carbaguanosine(34) in tRNA + guanine. Its pathway is tRNA modification; tRNA-queuosine biosynthesis. In terms of biological role, catalyzes the base-exchange of a guanine (G) residue with the queuine precursor 7-aminomethyl-7-deazaguanine (PreQ1) at position 34 (anticodon wobble position) in tRNAs with GU(N) anticodons (tRNA-Asp, -Asn, -His and -Tyr). Catalysis occurs through a double-displacement mechanism. The nucleophile active site attacks the C1' of nucleotide 34 to detach the guanine base from the RNA, forming a covalent enzyme-RNA intermediate. The proton acceptor active site deprotonates the incoming PreQ1, allowing a nucleophilic attack on the C1' of the ribose to form the product. After dissociation, two additional enzymatic reactions on the tRNA convert PreQ1 to queuine (Q), resulting in the hypermodified nucleoside queuosine (7-(((4,5-cis-dihydroxy-2-cyclopenten-1-yl)amino)methyl)-7-deazaguanosine). The protein is Queuine tRNA-ribosyltransferase of Enterococcus faecalis (strain ATCC 700802 / V583).